A 147-amino-acid polypeptide reads, in one-letter code: Large ribosomal subunit protein uL11 (147 aa).

It belongs to the universal ribosomal protein uL11 family. In terms of assembly, part of the ribosomal stalk of the 50S ribosomal subunit. Interacts with L10 and the large rRNA to form the base of the stalk. L10 forms an elongated spine to which L12 dimers bind in a sequential fashion forming a multimeric L10(L12)X complex. Post-translationally, one or more lysine residues are methylated.

In terms of biological role, forms part of the ribosomal stalk which helps the ribosome interact with GTP-bound translation factors. The sequence is that of Large ribosomal subunit protein uL11 from Bacteroides fragilis (strain ATCC 25285 / DSM 2151 / CCUG 4856 / JCM 11019 / LMG 10263 / NCTC 9343 / Onslow / VPI 2553 / EN-2).